The chain runs to 710 residues: MPVRRYGGRYNNSSPGVSNALSPSTTAGRPLSPSPAAGSKLASTHHDPVPQEAYYVNDEADAWHQQQAPFREPSVEVEVEMIDDEPPHGSQKSLSVAPYTANASSSSGRSKRNAITASGYTFYTNERQKTVYEALRSLRPLAELQEPRRVKEYAETSLKDSLYRIIEAHDVIMVAGAFFGDEGKGKTVDAVAHHPLCTCIARVNSGENAGHTVYDKAGRKFVFNLAPSGLLLPGKRNYIGPECVMDPVSFMEKEIIQLIDAGIDYRDRLFIGNVCIVTPYHKLLDLLGSAANSSTLKGMAPVHGSKVMKRGIRLDHIFNDDETLRKRLEKDMDTYLGLLKVKNLSDADVVRLCREENSDGVVRVPDYVIAFAQAKDKVEFLVKLYRDRVRHNPDFPARCDVTYELHAAVLRGEKVLLEGPQSYWLSNARTKFWESTTSADTTAAGLLAASQLNFQKFKSVVLNVHKAPGSSRVGIGACPSSFVPQDYFSAQNIKTLRDLPSETCANFEAVQRTLFRDGFPHSNDKARHNGIMAPVEYSDETGKYNIGVAMAIASAQHHGECGAVTKKPRVCGFFDCVLQHEVNSIQGPYLTISALDRGDEYDKVGVTIAYVYYNPEGKQVDVNGHVYKNGDIIRAGDPVPSEPALYHCHPIVKLIDGWRDNPIAAAKRRRNAPLPRGVCELLSTIEYFTNCKILSIGNGPNGDDIIYLRQ.

Disordered stretches follow at residues 1-51 and 84-111; these read MPVR…PVPQ and DEPP…GRSK. 2 stretches are compositionally biased toward polar residues: residues 10-27 and 101-111; these read YNNS…STTA and ANASSSSGRSK. Residues 180–186 and 210–212 contribute to the GTP site; these read GDEGKGK and GHT. Asp181 (proton acceptor) is an active-site residue. Mg(2+) is bound by residues Asp181 and Gly210. Residues 181–184, 208–211, Thr295, Lys309, Gln421, Thr437, and Lys567 contribute to the IMP site; these read DEGK and NAGH. His211 acts as the Proton donor in catalysis. 563 to 569 lines the substrate pocket; that stretch reads AVTKKPR. GTP contacts are provided by residues Arg569 and 697 to 699; that span reads GNG.

Belongs to the adenylosuccinate synthetase family. As to quaternary structure, homodimer. The cofactor is Mg(2+).

The protein localises to the cytoplasm. It carries out the reaction IMP + L-aspartate + GTP = N(6)-(1,2-dicarboxyethyl)-AMP + GDP + phosphate + 2 H(+). It participates in purine metabolism; AMP biosynthesis via de novo pathway; AMP from IMP: step 1/2. Functionally, plays an important role in the salvage pathway for purine nucleotide biosynthesis. Catalyzes the first committed step in the biosynthesis of AMP from IMP. The protein is Adenylosuccinate synthetase of Leishmania infantum.